Reading from the N-terminus, the 460-residue chain is MVWNTNLRWRLPVTCLLLQVALVVLFGVFVRYDMDADPHWIDKKEAENSTSDMENEFYYRYPSFQDVHVMIFVGFGFLMTFLQRYGYSSVGFNFLLAAFGIQWALLLQGWFHSYYRGYIRVGVENLINADFCVGSVCVAFGAVLGKVSPVQLLIMTLFQVTLFSVNEFILLNLLEVKDAGGSMTIHTFGAYFGLTVTWILYRPGLHQSKERQSSVYHSDLFAMIGTLFLWMYWPSFNSAVSNHGDAQHRAAINTYCSLAACVLTSVALSSALHKKGKLDMVHIQNATLAGGVAVGTAAEMMLMPYGSLIVGFICGIVSTLGFVYLTPFLESRLRVQDTCGIHNLHGIPGIIGAIVGAVTASCANTDVYGVNGLTQAFGFDGFKTNRTPSMQGKFQAAGLFVSLAMALVGGIIVGIILKLPFWGQPADENCFEDAIYWEMPEEPKSTVLHPEDSTLKPSEP.

The Cytoplasmic segment spans residues 1–9; it reads MVWNTNLRW. Residues 10-30 traverse the membrane as a helical segment; sequence RLPVTCLLLQVALVVLFGVFV. Residues 31 to 61 lie on the Extracellular side of the membrane; the sequence is RYDMDADPHWIDKKEAENSTSDMENEFYYRY. The N-linked (GlcNAc...) asparagine glycan is linked to N48. Residues 62-82 traverse the membrane as a helical segment; the sequence is PSFQDVHVMIFVGFGFLMTFL. Topologically, residues 83 to 90 are cytoplasmic; the sequence is QRYGYSSV. Residues 91–111 traverse the membrane as a helical segment; the sequence is GFNFLLAAFGIQWALLLQGWF. Over 112–125 the chain is Extracellular; it reads HSYYRGYIRVGVEN. Residues 126–145 traverse the membrane as a helical segment; that stretch reads LINADFCVGSVCVAFGAVLG. The Cytoplasmic segment spans residues 146–151; it reads KVSPVQ. The helical transmembrane segment at 152-174 threads the bilayer; sequence LLIMTLFQVTLFSVNEFILLNLL. The Extracellular segment spans residues 175-179; sequence EVKDA. The helical transmembrane segment at 180–200 threads the bilayer; it reads GGSMTIHTFGAYFGLTVTWIL. Residues 201–219 are Cytoplasmic-facing; it reads YRPGLHQSKERQSSVYHSD. A helical membrane pass occupies residues 220–240; it reads LFAMIGTLFLWMYWPSFNSAV. The Extracellular portion of the chain corresponds to 241 to 251; it reads SNHGDAQHRAA. The helical transmembrane segment at 252–272 threads the bilayer; that stretch reads INTYCSLAACVLTSVALSSAL. Residues 273-285 lie on the Cytoplasmic side of the membrane; the sequence is HKKGKLDMVHIQN. The helical transmembrane segment at 286-306 threads the bilayer; the sequence is ATLAGGVAVGTAAEMMLMPYG. Residue S307 is a topological domain, extracellular. A helical membrane pass occupies residues 308 to 328; it reads LIVGFICGIVSTLGFVYLTPF. The Cytoplasmic segment spans residues 329–339; it reads LESRLRVQDTC. The chain crosses the membrane as a helical span at residues 340-360; sequence GIHNLHGIPGIIGAIVGAVTA. Residues 361–396 lie on the Extracellular side of the membrane; it reads SCANTDVYGVNGLTQAFGFDGFKTNRTPSMQGKFQA. The chain crosses the membrane as a helical span at residues 397–417; that stretch reads AGLFVSLAMALVGGIIVGIIL. Topologically, residues 418-460 are cytoplasmic; that stretch reads KLPFWGQPADENCFEDAIYWEMPEEPKSTVLHPEDSTLKPSEP.

The protein belongs to the ammonium transporter (TC 2.A.49) family. Rh subfamily. Homotrimer. In terms of processing, N-glycosylated.

It is found in the apical cell membrane. The catalysed reaction is NH4(+)(in) = NH4(+)(out). It catalyses the reaction methylamine(out) = methylamine(in). The enzyme catalyses CO2(out) = CO2(in). In terms of biological role, ammonium transporter involved in the maintenance of acid-base homeostasis. Transports ammonium and its related derivative methylammonium across the plasma membrane of epithelial cells likely contributing to renal transepithelial ammonia transport and ammonia metabolism. Postulated to primarily mediate an electroneutral bidirectional transport of NH3 ammonia species according to a mechanism that implies interaction of an NH4(+) ion with acidic residues of the pore entry followed by dissociation of NH4(+) into NH3 and H(+). As a result NH3 transits through the central pore and is protonated on the extracellular side reforming NH4(+). May act as a CO2 channel providing for renal acid secretion. In Canis lupus familiaris (Dog), this protein is Ammonium transporter Rh type C (RHCG).